A 157-amino-acid chain; its full sequence is Frd operon probable iron-sulfur subunit A (157 aa).

4Fe-4S ferredoxin-type domains follow at residues Lys24–Lys55, Asp56–Arg85, and Phe100–Arg133. Cys34, Cys37, Cys42, Cys46, Cys65, Cys68, Cys71, Cys75, Cys107, Cys110, Cys119, and Cys123 together coordinate [4Fe-4S] cluster.

In Proteus vulgaris, this protein is Frd operon probable iron-sulfur subunit A.